Here is a 351-residue protein sequence, read N- to C-terminus: Homeobox-leucine zipper protein HOX23 (351 aa).

The disordered stretch occupies residues 34-128; sequence LQDHAHGGHG…SFESGNKLEP (95 aa). Low complexity predominate over residues 56–65; sequence SPFLPDLAMD. Positions 101-160 form a DNA-binding region, homeobox; it reads GGEKKRRLSVEQVRTLERSFESGNKLEPERKAQLARALGLQPRQVAIWFQNRRARWKTKQ. Positions 114-128 are enriched in basic and acidic residues; the sequence is RTLERSFESGNKLEP. The tract at residues 159 to 203 is leucine-zipper; the sequence is KQLEKDFDALRRQLDAARAENDALLSLNSKLHAEIVALKGGAAAA. The interval 227-263 is disordered; it reads EASCSNRSENSSEINLDISRPAPPPPPPPANESPVNR. A compositionally biased stretch (polar residues) spans 228 to 240; sequence ASCSNRSENSSEI. Over residues 247–257 the composition is skewed to pro residues; the sequence is PAPPPPPPPAN.

This sequence belongs to the HD-ZIP homeobox family. Class I subfamily. In terms of tissue distribution, expressed in seedlings, roots, stems, leaf sheaths and panicles.

The protein localises to the nucleus. Probable transcription factor. The chain is Homeobox-leucine zipper protein HOX23 (HOX23) from Oryza sativa subsp. indica (Rice).